Consider the following 426-residue polypeptide: Synaptotagmin-13 (426 aa).

The Vesicular portion of the chain corresponds to 1 to 6 (MVLSVP). A helical membrane pass occupies residues 7 to 29 (VIALGATLGTATSILALCGVTCL). At 30 to 426 (CRHMHPKKGL…QIAMWHQLHL (397 aa)) the chain is on the cytoplasmic side. 2 consecutive C2 domains span residues 158–275 (QAPK…AQWG) and 287–422 (GAGE…AMWH).

Belongs to the synaptotagmin family. Interacts with NRXN1. In terms of tissue distribution, expressed in brain, pancreas and kidney.

The protein localises to the membrane. Its function is as follows. May be involved in transport vesicle docking to the plasma membrane. In Homo sapiens (Human), this protein is Synaptotagmin-13 (SYT13).